A 330-amino-acid polypeptide reads, in one-letter code: T-cell leukemia homeobox protein 1 (330 aa).

The disordered stretch occupies residues 186–207 (DRFTGHPYQNRTPPKKKKPRTS). Positions 201–260 (KKKPRTSFTRLQICELEKRFHRQKYLASAERAALAKALKMTDAQVKTWFQNRRTKWRRQT) form a DNA-binding region, homeobox. Lys236 bears the N6-acetyllysine mark.

Interacts with MEIS1, MEIS2, PBX1, PBX2 and PBX3.

The protein localises to the nucleus. Its function is as follows. Controls the genesis of the spleen. Binds to the DNA sequence 5'-GGCGGTAAGTGG-3'. This is T-cell leukemia homeobox protein 1 (TLX1) from Homo sapiens (Human).